The chain runs to 271 residues: Glutamate racemase (271 aa).

Residues 12-13 and 44-45 contribute to the substrate site; these read DS and YG. C75 serves as the catalytic Proton donor/acceptor. 76 to 77 is a substrate binding site; it reads NS. Catalysis depends on C185, which acts as the Proton donor/acceptor. 186-187 contributes to the substrate binding site; that stretch reads TH.

The protein belongs to the aspartate/glutamate racemases family.

The enzyme catalyses L-glutamate = D-glutamate. It functions in the pathway cell wall biogenesis; peptidoglycan biosynthesis. Its function is as follows. Provides the (R)-glutamate required for cell wall biosynthesis. The protein is Glutamate racemase of Mycobacterium bovis (strain BCG / Pasteur 1173P2).